Consider the following 1145-residue polypeptide: Cation channel sperm-associated auxiliary subunit gamma 2 (1145 aa).

The first 38 residues, 1-38 (MVSRPAMSPVSPVWPRKPNLWAFWVLRLVLLLSLKSWA), serve as a signal peptide directing secretion. Topologically, residues 39–1061 (EDALQHCTWL…IHGLPLSSKR (1023 aa)) are extracellular. Intrachain disulfides connect C45–C106 and C160–C166. N-linked (GlcNAc...) asparagine glycosylation occurs at N103. A glycan (N-linked (GlcNAc...) asparagine) is linked at N178. The cysteines at positions 289 and 344 are disulfide-linked. N-linked (GlcNAc...) asparagine glycosylation is found at N356, N402, N672, and N743. 6 disulfide bridges follow: C395/C403, C634/C856, C802/C830, C878/C1042, C905/C914, and C1006/C1012. N-linked (GlcNAc...) asparagine glycosylation occurs at N1038. The helical transmembrane segment at 1062-1083 (TSFIVMVSTSFFIALVVFYILF) threads the bilayer. Residues 1084-1145 (CLVWPHIVKA…KEDNVQAKTA (62 aa)) lie on the Cytoplasmic side of the membrane.

Belongs to the CATSPERG family. As to quaternary structure, component of the CatSper complex or CatSpermasome composed of the core pore-forming members CATSPER1, CATSPER2, CATSPER3 and CATSPER4 as well as auxiliary members CATSPERB, CATSPERG2, CATSPERD, CATSPERE, CATSPERZ, C2CD6/CATSPERT, SLCO6C1, TMEM249, TMEM262 and EFCAB9. HSPA1 may be an additional auxiliary complex member. The core complex members CATSPER1, CATSPER2, CATSPER3 and CATSPER4 form a heterotetrameric channel. The auxiliary CATSPERB, CATSPERG2, CATSPERD and CATSPERE subunits form a pavilion-like structure over the pore which stabilizes the complex through interactions with CATSPER4, CATSPER3, CATSPER1 and CATSPER2 respectively. SLCO6C1 interacts with CATSPERE and TMEM262/CATSPERH interacts with CATSPERB, further stabilizing the complex. C2CD6/CATSPERT interacts at least with CATSPERD and is required for targeting the CatSper complex in the flagellar membrane. Testis-specific. Specifically expressed in the principal piece of the sperm tail (at protein level). Expressed in spermatocytes and spermatids within the seminiferous tubule but not in interstitial cells.

The protein resides in the cell projection. Its subcellular location is the cilium. It localises to the flagellum membrane. Its function is as follows. Auxiliary component of the CatSper complex, a complex involved in sperm cell hyperactivation. Sperm cell hyperactivation is needed for sperm motility which is essential late in the preparation of sperm for fertilization. The polypeptide is Cation channel sperm-associated auxiliary subunit gamma 2 (Mus musculus (Mouse)).